We begin with the raw amino-acid sequence, 475 residues long: Membrane-bound lytic murein transglycosylase F (475 aa).

The N-terminal stretch at 1-15 is a signal peptide; the sequence is MKKLLLILCCITLLA. The segment at 16-258 is non-LT domain; sequence ACQKVVVEQE…HLNEKYFAHV (243 aa). Residues 259–475 form an LT domain region; sequence KRFDYVDTRA…KTEAAQPQQP (217 aa). Glutamate 303 is an active-site residue.

The protein in the N-terminal section; belongs to the bacterial solute-binding protein 3 family. This sequence in the C-terminal section; belongs to the transglycosylase Slt family.

The protein resides in the cell outer membrane. The catalysed reaction is Exolytic cleavage of the (1-&gt;4)-beta-glycosidic linkage between N-acetylmuramic acid (MurNAc) and N-acetylglucosamine (GlcNAc) residues in peptidoglycan, from either the reducing or the non-reducing ends of the peptidoglycan chains, with concomitant formation of a 1,6-anhydrobond in the MurNAc residue.. Murein-degrading enzyme that degrades murein glycan strands and insoluble, high-molecular weight murein sacculi, with the concomitant formation of a 1,6-anhydromuramoyl product. Lytic transglycosylases (LTs) play an integral role in the metabolism of the peptidoglycan (PG) sacculus. Their lytic action creates space within the PG sacculus to allow for its expansion as well as for the insertion of various structures such as secretion systems and flagella. The protein is Membrane-bound lytic murein transglycosylase F of Shewanella halifaxensis (strain HAW-EB4).